We begin with the raw amino-acid sequence, 530 residues long: Autoinducer-2 kinase (530 aa).

It belongs to the FGGY kinase family.

Its subcellular location is the cytoplasm. The catalysed reaction is (S)-4,5-dihydroxypentane-2,3-dione + ATP = (2S)-2-hydroxy-3,4-dioxopentyl phosphate + ADP + H(+). Functionally, catalyzes the phosphorylation of autoinducer-2 (AI-2) to phospho-AI-2, which subsequently inactivates the transcriptional regulator LsrR and leads to the transcription of the lsr operon. Phosphorylates the ring-open form of (S)-4,5-dihydroxypentane-2,3-dione (DPD), which is the precursor to all AI-2 signaling molecules, at the C5 position. The polypeptide is Autoinducer-2 kinase (Salmonella choleraesuis (strain SC-B67)).